Reading from the N-terminus, the 336-residue chain is N-acetyl-gamma-glutamyl-phosphate reductase (336 aa).

Cysteine 156 is a catalytic residue.

It belongs to the NAGSA dehydrogenase family. Type 1 subfamily.

It is found in the cytoplasm. It carries out the reaction N-acetyl-L-glutamate 5-semialdehyde + phosphate + NADP(+) = N-acetyl-L-glutamyl 5-phosphate + NADPH + H(+). The protein operates within amino-acid biosynthesis; L-arginine biosynthesis; N(2)-acetyl-L-ornithine from L-glutamate: step 3/4. Functionally, catalyzes the NADPH-dependent reduction of N-acetyl-5-glutamyl phosphate to yield N-acetyl-L-glutamate 5-semialdehyde. This Moritella profunda protein is N-acetyl-gamma-glutamyl-phosphate reductase.